The primary structure comprises 728 residues: 1,4-alpha-glucan branching enzyme GlgB (728 aa).

D405 functions as the Nucleophile in the catalytic mechanism. The Proton donor role is filled by E458.

It belongs to the glycosyl hydrolase 13 family. GlgB subfamily. Monomer.

It carries out the reaction Transfers a segment of a (1-&gt;4)-alpha-D-glucan chain to a primary hydroxy group in a similar glucan chain.. It functions in the pathway glycan biosynthesis; glycogen biosynthesis. Its function is as follows. Catalyzes the formation of the alpha-1,6-glucosidic linkages in glycogen by scission of a 1,4-alpha-linked oligosaccharide from growing alpha-1,4-glucan chains and the subsequent attachment of the oligosaccharide to the alpha-1,6 position. This Klebsiella pneumoniae subsp. pneumoniae (strain ATCC 700721 / MGH 78578) protein is 1,4-alpha-glucan branching enzyme GlgB.